The chain runs to 617 residues: Protein fem-1 homolog C (617 aa).

ANK repeat units follow at residues 2 to 31 (DLKTAVFNAARDGKLRLLSKLLENKAKDDV), 40 to 70 (NGATPLLMAARYGHLDMVDYLLDQCSASVEI), 82 to 111 (EGAPPLWAASAAGHLKVVRSLLVHGASVNN), 115 to 144 (TNSTPLRAACFDGHLEIVKYLVEHKADLEV), 148 to 177 (HGHTCLMISCYKGHKEIAQFLLEKGADVNR), 181 to 210 (KGNTALHDCAESGSLEIMQMLLKYGARMEK), and 213 to 242 (YGMTPLLSASVTGHTNIVDFLTQNPQTSKN). TPR repeat units lie at residues 245-279 (INALELLGATFVDKKRDLLGALKYWKRAMDMRHSD) and 338-371 (SYYIRYRGAVYADSGNFKRCINLWKYALDMQQNN). ANK repeat units lie at residues 481–523 (NNFS…DVNV) and 527–556 (EQNSPLHVAALNNHPDIMNLLVKSGAHFDS).

It belongs to the fem-1 family. As to quaternary structure, component of a CRL2 E3 ubiquitin-protein ligase complex, also named ECS (Elongin BC-CUL2/5-SOCS-box protein) complex.

The protein operates within protein modification; protein ubiquitination. Functionally, substrate-recognition component of a Cul2-RING (CRL2) E3 ubiquitin-protein ligase complex of the DesCEND (destruction via C-end degrons) pathway, which recognizes a C-degron located at the extreme C terminus of target proteins, leading to their ubiquitination and degradation. The C-degron recognized by the DesCEND pathway is usually a motif of less than ten residues and can be present in full-length proteins, truncated proteins or proteolytically cleaved forms. The CRL2(FEM1C) complex specifically recognizes proteins with an arginine at the C-terminus: recognizes and binds proteins ending with -Lys/Arg-Xaa-Arg and -Lys/Arg-Xaa-Xaa-Arg C-degrons, leading to their ubiquitination and degradation. The chain is Protein fem-1 homolog C from Xenopus laevis (African clawed frog).